The following is a 350-amino-acid chain: Heme A synthase (350 aa).

8 consecutive transmembrane segments (helical) span residues 16–36 (LARWLFVVAFMVVAIVAVGGI), 77–97 (FQLVNGPAGMTLATYKFIFFW), 101–121 (HRLLARTIGLVFAAPLAWFWI), 136–156 (LLALGALQGAVGWWMVKSGIV), 170–190 (LLVALFTLGGLVWTALDLVAL), 201–221 (GIGLLALAMLVLQLFYGALVA), 265–285 (VFLVHFIHRWWAWAVVAVLVV), and 299–321 (IVLHSVFGTQVLLGIFTVWSGVA). His-272 is a binding site for heme. His-328 serves as a coordination point for heme.

The protein belongs to the COX15/CtaA family. Type 2 subfamily. In terms of assembly, interacts with CtaB. It depends on heme b as a cofactor.

The protein localises to the cell membrane. It carries out the reaction Fe(II)-heme o + 2 A + H2O = Fe(II)-heme a + 2 AH2. Its pathway is porphyrin-containing compound metabolism; heme A biosynthesis; heme A from heme O: step 1/1. Its function is as follows. Catalyzes the conversion of heme O to heme A by two successive hydroxylations of the methyl group at C8. The first hydroxylation forms heme I, the second hydroxylation results in an unstable dihydroxymethyl group, which spontaneously dehydrates, resulting in the formyl group of heme A. The polypeptide is Heme A synthase (Novosphingobium aromaticivorans (strain ATCC 700278 / DSM 12444 / CCUG 56034 / CIP 105152 / NBRC 16084 / F199)).